Reading from the N-terminus, the 266-residue chain is Phosphate import ATP-binding protein PstB 1 (266 aa).

Residues 21 to 261 (ISTQDLSVFY…PKGEITEDYI (241 aa)) form the ABC transporter domain. 54–61 (GGSGSGKS) lines the ATP pocket.

The protein belongs to the ABC transporter superfamily. Phosphate importer (TC 3.A.1.7) family. In terms of assembly, the complex is composed of two ATP-binding proteins (PstB), two transmembrane proteins (PstC and PstA) and a solute-binding protein (PstS).

It localises to the cell membrane. The enzyme catalyses phosphate(out) + ATP + H2O = ADP + 2 phosphate(in) + H(+). Part of the ABC transporter complex PstSACB involved in phosphate import. Responsible for energy coupling to the transport system. The chain is Phosphate import ATP-binding protein PstB 1 from Lactobacillus johnsonii (strain CNCM I-12250 / La1 / NCC 533).